The primary structure comprises 79 residues: Large ribosomal subunit protein uL29 (79 aa).

Belongs to the universal ribosomal protein uL29 family.

The polypeptide is Large ribosomal subunit protein uL29 (Gluconacetobacter diazotrophicus (strain ATCC 49037 / DSM 5601 / CCUG 37298 / CIP 103539 / LMG 7603 / PAl5)).